The following is a 181-amino-acid chain: Translation initiation factor IF-3, chloroplastic (181 aa).

Belongs to the IF-3 family. Monomer.

Its subcellular location is the plastid. The protein resides in the chloroplast. In terms of biological role, IF-3 binds to the 30S ribosomal subunit and shifts the equilibrium between 70S ribosomes and their 50S and 30S subunits in favor of the free subunits, thus enhancing the availability of 30S subunits on which protein synthesis initiation begins. This chain is Translation initiation factor IF-3, chloroplastic, found in Gracilaria tenuistipitata var. liui (Red alga).